The sequence spans 393 residues: Probable xylan O-acetyltransferase 11 (393 aa).

Residues 1-9 (MHQPAIMQR) are Cytoplasmic-facing. The helical; Signal-anchor for type II membrane protein transmembrane segment at 10 to 26 (ALAVVALLAAAAAIAAA) threads the bilayer. Residues 27–393 (QGESPELLPF…LFFPARDEAI (367 aa)) lie on the Lumenal side of the membrane. 4 disulfides stabilise this stretch: cysteine 45–cysteine 96, cysteine 67–cysteine 132, cysteine 76–cysteine 368, and cysteine 283–cysteine 364. The N-linked (GlcNAc...) asparagine glycan is linked to asparagine 102. Positions 119–121 (GDS) match the GDS motif motif. Serine 121 serves as the catalytic Nucleophile. The N-linked (GlcNAc...) asparagine glycan is linked to asparagine 325. The active-site Proton donor is aspartate 363. Positions 363–366 (DCTH) match the DXXH motif motif. Catalysis depends on histidine 366, which acts as the Proton acceptor.

This sequence belongs to the PC-esterase family. TBL subfamily. In terms of tissue distribution, expressed in roots, leaves and stems.

The protein localises to the golgi apparatus membrane. Functionally, probable xylan acetyltransferase required for 2-O- and 3-O-monoacetylation of xylosyl residues in xylan. Possesses extremely low activity in vitro. The polypeptide is Probable xylan O-acetyltransferase 11 (Oryza sativa subsp. japonica (Rice)).